A 403-amino-acid chain; its full sequence is UPF0284 protein PMT_1350 (403 aa).

It belongs to the UPF0284 family.

The protein is UPF0284 protein PMT_1350 of Prochlorococcus marinus (strain MIT 9313).